Here is a 302-residue protein sequence, read N- to C-terminus: Pseudouridine-5'-phosphate glycosidase (302 aa).

Catalysis depends on Glu25, which acts as the Proton donor. Residues Lys86 and Val106 each coordinate substrate. Asp138 lines the Mn(2+) pocket. 140 to 142 (SAD) contributes to the substrate binding site. Lys159 acts as the Nucleophile in catalysis.

Belongs to the pseudouridine-5'-phosphate glycosidase family. As to quaternary structure, homotrimer. It depends on Mn(2+) as a cofactor.

It catalyses the reaction D-ribose 5-phosphate + uracil = psi-UMP + H2O. Catalyzes the reversible cleavage of pseudouridine 5'-phosphate (PsiMP) to ribose 5-phosphate and uracil. Functions biologically in the cleavage direction, as part of a pseudouridine degradation pathway. This is Pseudouridine-5'-phosphate glycosidase from Jannaschia sp. (strain CCS1).